Here is a 255-residue protein sequence, read N- to C-terminus: NAD kinase (255 aa).

Catalysis depends on Asp-44, which acts as the Proton acceptor. NAD(+)-binding positions include Asp-44–Gly-45, His-49, Asn-114–Glu-115, Asp-144, Ala-152, Ser-155–Ser-160, and Gln-216.

The protein belongs to the NAD kinase family. The cofactor is a divalent metal cation.

The protein localises to the cytoplasm. The catalysed reaction is NAD(+) + ATP = ADP + NADP(+) + H(+). Its function is as follows. Involved in the regulation of the intracellular balance of NAD and NADP, and is a key enzyme in the biosynthesis of NADP. Catalyzes specifically the phosphorylation on 2'-hydroxyl of the adenosine moiety of NAD to yield NADP. In Rickettsia akari (strain Hartford), this protein is NAD kinase.